A 198-amino-acid polypeptide reads, in one-letter code: MRIKKSDFITSAVKKNQYPIDNRVEVAFVGRSNVGKSSLINSLTNRKKLAKVSQTPGKTRLVNFFLINDDFYLVDLPGYGYAKVSKAEKDSWGKTVEMYLTGREQLKRVVLLVDSRHKPTGDDIIMHEWIKHFGYDVIVVATKSDKLTRNELKKNEKVIKETLKLNSDDKLYFFSSLNKDGKDELIDNLFLEFATDLD.

One can recognise an EngB-type G domain in the interval 22 to 195 (NRVEVAFVGR…IDNLFLEFAT (174 aa)). Residues 30-37 (GRSNVGKS), 57-61 (GKTRL), 75-78 (DLPG), 142-145 (TKSD), and 174-176 (FSS) contribute to the GTP site. Positions 37 and 59 each coordinate Mg(2+).

Belongs to the TRAFAC class TrmE-Era-EngA-EngB-Septin-like GTPase superfamily. EngB GTPase family. Mg(2+) is required as a cofactor.

Its function is as follows. Necessary for normal cell division and for the maintenance of normal septation. This is Probable GTP-binding protein EngB from Clostridium beijerinckii (strain ATCC 51743 / NCIMB 8052) (Clostridium acetobutylicum).